A 391-amino-acid chain; its full sequence is MSGRFGRFGGQYVPETVMNALIELEREFEKAKEDKDFMEEYRYYLREYSGRPTPLYYAENLTKRLGGAKIYLKREDLNHTGAHKINNVLGQILLAKRMNKKRVIAETGAGQHGVATATAAAMFGMECEIFMGEEDIKRQSLNVFRMKLLGAKVTPVTTGTKTLKDAVNEAIRDWVTNIDNTFYVIGSVVGPHPYPTMVRDFQRVIGDEAKEQILQKEGRLPDYVIACVGGGSNAMGIFYPFIEDKEVKLIGVEAAGEGIETGKHAAAMAKGSVGVLHGMMTYLLQDEEGRIMPVYSISAGLDYPGVGPEHAFLKESNRAQYVYATDEEALAAFMDLSQTEGIIPALESAHALAYAMKLAPNLTKDNIIIVNLSGRGDKDVNTVAKVLGVEL.

Residue Lys84 is modified to N6-(pyridoxal phosphate)lysine.

This sequence belongs to the TrpB family. Tetramer of two alpha and two beta chains. The cofactor is pyridoxal 5'-phosphate.

The catalysed reaction is (1S,2R)-1-C-(indol-3-yl)glycerol 3-phosphate + L-serine = D-glyceraldehyde 3-phosphate + L-tryptophan + H2O. It functions in the pathway amino-acid biosynthesis; L-tryptophan biosynthesis; L-tryptophan from chorismate: step 5/5. In terms of biological role, the beta subunit is responsible for the synthesis of L-tryptophan from indole and L-serine. In Thermoanaerobacter pseudethanolicus (strain ATCC 33223 / 39E) (Clostridium thermohydrosulfuricum), this protein is Tryptophan synthase beta chain.